We begin with the raw amino-acid sequence, 317 residues long: Carbamate kinase (317 aa).

This sequence belongs to the carbamate kinase family. Homodimer.

The catalysed reaction is hydrogencarbonate + NH4(+) + ATP = carbamoyl phosphate + ADP + H2O + H(+). It participates in metabolic intermediate metabolism; carbamoyl phosphate degradation; CO(2) and NH(3) from carbamoyl phosphate: step 1/1. This chain is Carbamate kinase (CBK), found in Giardia intestinalis (Giardia lamblia).